A 505-amino-acid chain; its full sequence is RNA-splicing ligase RtcB homolog (505 aa).

Residues D119, C122, H227, H259, and H353 each contribute to the Mn(2+) site. 226–230 (NHYAE) is a GMP binding site. GMP-binding positions include 353–354 (HN), 402–405 (GGTM), S409, 428–431 (HGAG), and K504. Residue H428 is the GMP-histidine intermediate of the active site.

Belongs to the RtcB family. In terms of assembly, catalytic component of the tRNA-splicing ligase complex. Mn(2+) is required as a cofactor.

It catalyses the reaction a 3'-end 3'-phospho-ribonucleotide-RNA + a 5'-end dephospho-ribonucleoside-RNA + GTP = a ribonucleotidyl-ribonucleotide-RNA + GMP + diphosphate. The enzyme catalyses a 3'-end 2',3'-cyclophospho-ribonucleotide-RNA + a 5'-end dephospho-ribonucleoside-RNA + GTP + H2O = a ribonucleotidyl-ribonucleotide-RNA + GMP + diphosphate + H(+). Its function is as follows. Catalytic subunit of the tRNA-splicing ligase complex that acts by directly joining spliced tRNA halves to mature-sized tRNAs by incorporating the precursor-derived splice junction phosphate into the mature tRNA as a canonical 3',5'-phosphodiester. May act as an RNA ligase with broad substrate specificity, and may function toward other RNAs. This Nematostella vectensis (Starlet sea anemone) protein is RNA-splicing ligase RtcB homolog.